The following is a 165-amino-acid chain: UPF0669 protein v1g209471 (165 aa).

Residues 1–23 form the signal peptide; the sequence is MQGRYSAPLFLLLWLFFLHGTLC. Residue Asn38 is glycosylated (N-linked (GlcNAc...) asparagine).

It belongs to the UPF0669 family.

It localises to the secreted. The polypeptide is UPF0669 protein v1g209471 (Nematostella vectensis (Starlet sea anemone)).